Reading from the N-terminus, the 428-residue chain is MTRSDELFEQAKKTIPGGVNSPVRAFNGVGGSPRFIEKADGAYIYDADGKAYIDYVGSWGPMILGHNHPKIREAVLAAVENGLSFGAPTELEVTMAEKVIEMVPSMEQVRMVSSGTEATMSAIRLARGFTSRDKILKFEGCYHGHADCLLVKAGSGALTLGQPSSPGIPEDFAKHTLTATYNDLESVKALFEQYPEEISCIILEPVAGNMNCIPPVEGFLQGLRAICDQYGALMIIDEVMTGFRVSKSGAQGHYGVTPDLTTLGKVIGGGMPVGAFGGRKDVMQFIAPTGPVYQAGTLSGNPIAMSAGLAQMDALCEEGVYEELAAKTKRIAEGFKAAANKHGIPMSINYVGGMFGLFFTEEEKVTSFEQVTKCDADKFPEFYHGMLDEGVYLAPSAYEAGFLSMAHGEKELEETLAAADRVFAKMAK.

At Lys-265 the chain carries N6-(pyridoxal phosphate)lysine.

It belongs to the class-III pyridoxal-phosphate-dependent aminotransferase family. HemL subfamily. Homodimer. Pyridoxal 5'-phosphate serves as cofactor.

The protein resides in the cytoplasm. The catalysed reaction is (S)-4-amino-5-oxopentanoate = 5-aminolevulinate. Its pathway is porphyrin-containing compound metabolism; protoporphyrin-IX biosynthesis; 5-aminolevulinate from L-glutamyl-tRNA(Glu): step 2/2. This Shewanella sediminis (strain HAW-EB3) protein is Glutamate-1-semialdehyde 2,1-aminomutase.